Consider the following 490-residue polypeptide: Glutamate--tRNA ligase (490 aa).

The 'HIGH' region motif lies at P12–L22. The 'KMSKS' region motif lies at K256 to R260. K259 is an ATP binding site.

This sequence belongs to the class-I aminoacyl-tRNA synthetase family. Glutamate--tRNA ligase type 1 subfamily. As to quaternary structure, monomer.

It is found in the cytoplasm. It catalyses the reaction tRNA(Glu) + L-glutamate + ATP = L-glutamyl-tRNA(Glu) + AMP + diphosphate. In terms of biological role, catalyzes the attachment of glutamate to tRNA(Glu) in a two-step reaction: glutamate is first activated by ATP to form Glu-AMP and then transferred to the acceptor end of tRNA(Glu). This Mycobacterium sp. (strain JLS) protein is Glutamate--tRNA ligase.